Consider the following 294-residue polypeptide: tRNA dimethylallyltransferase (294 aa).

10–17 (GPTAVGKT) contributes to the ATP binding site. 12–17 (TAVGKT) is a substrate binding site. The segment at 35-38 (DSQQ) is interaction with substrate tRNA.

The protein belongs to the IPP transferase family. In terms of assembly, monomer. Requires Mg(2+) as cofactor.

The catalysed reaction is adenosine(37) in tRNA + dimethylallyl diphosphate = N(6)-dimethylallyladenosine(37) in tRNA + diphosphate. Its function is as follows. Catalyzes the transfer of a dimethylallyl group onto the adenine at position 37 in tRNAs that read codons beginning with uridine, leading to the formation of N6-(dimethylallyl)adenosine (i(6)A). The sequence is that of tRNA dimethylallyltransferase from Streptococcus suis (strain 98HAH33).